A 309-amino-acid polypeptide reads, in one-letter code: tRNA dimethylallyltransferase 1 (309 aa).

An ATP-binding site is contributed by Gly-14 to Ser-21. Thr-16–Ser-21 is a binding site for substrate. An interaction with substrate tRNA region spans residues Asp-39 to Gln-42.

This sequence belongs to the IPP transferase family. In terms of assembly, monomer. The cofactor is Mg(2+).

The enzyme catalyses adenosine(37) in tRNA + dimethylallyl diphosphate = N(6)-dimethylallyladenosine(37) in tRNA + diphosphate. Catalyzes the transfer of a dimethylallyl group onto the adenine at position 37 in tRNAs that read codons beginning with uridine, leading to the formation of N6-(dimethylallyl)adenosine (i(6)A). This chain is tRNA dimethylallyltransferase 1, found in Pelobacter propionicus (strain DSM 2379 / NBRC 103807 / OttBd1).